The chain runs to 269 residues: 4-hydroxy-tetrahydrodipicolinate reductase (269 aa).

NAD(+) is bound by residues 8–13 (GAAGRM) and E34. Residue R35 participates in NADP(+) binding. NAD(+)-binding positions include 98–100 (GTT) and 122–125 (APNY). Catalysis depends on H155, which acts as the Proton donor/acceptor. Residue H156 coordinates (S)-2,3,4,5-tetrahydrodipicolinate. The Proton donor role is filled by K159. Residue 165–166 (GT) coordinates (S)-2,3,4,5-tetrahydrodipicolinate.

The protein belongs to the DapB family.

It is found in the cytoplasm. It catalyses the reaction (S)-2,3,4,5-tetrahydrodipicolinate + NAD(+) + H2O = (2S,4S)-4-hydroxy-2,3,4,5-tetrahydrodipicolinate + NADH + H(+). The enzyme catalyses (S)-2,3,4,5-tetrahydrodipicolinate + NADP(+) + H2O = (2S,4S)-4-hydroxy-2,3,4,5-tetrahydrodipicolinate + NADPH + H(+). It participates in amino-acid biosynthesis; L-lysine biosynthesis via DAP pathway; (S)-tetrahydrodipicolinate from L-aspartate: step 4/4. In terms of biological role, catalyzes the conversion of 4-hydroxy-tetrahydrodipicolinate (HTPA) to tetrahydrodipicolinate. In Vibrio cholerae serotype O1 (strain ATCC 39315 / El Tor Inaba N16961), this protein is 4-hydroxy-tetrahydrodipicolinate reductase.